The chain runs to 206 residues: Holliday junction branch migration complex subunit RuvA (206 aa).

A domain I region spans residues 1–64; it reads MIGKLKGTLD…EDMLRLYGFQ (64 aa). Residues 65 to 144 form a domain II region; sequence SALEREWFRL…AYAGAASGTI (80 aa). Residues 145–154 form a flexible linker region; the sequence is GLKQELGEGV. A domain III region spans residues 154 to 206; the sequence is VAPAPITDAVSALVNLGYSRDTAANAVAAALKTAGEDADASKLIRFGLKELAR.

It belongs to the RuvA family. In terms of assembly, homotetramer. Forms an RuvA(8)-RuvB(12)-Holliday junction (HJ) complex. HJ DNA is sandwiched between 2 RuvA tetramers; dsDNA enters through RuvA and exits via RuvB. An RuvB hexamer assembles on each DNA strand where it exits the tetramer. Each RuvB hexamer is contacted by two RuvA subunits (via domain III) on 2 adjacent RuvB subunits; this complex drives branch migration. In the full resolvosome a probable DNA-RuvA(4)-RuvB(12)-RuvC(2) complex forms which resolves the HJ.

It localises to the cytoplasm. The RuvA-RuvB-RuvC complex processes Holliday junction (HJ) DNA during genetic recombination and DNA repair, while the RuvA-RuvB complex plays an important role in the rescue of blocked DNA replication forks via replication fork reversal (RFR). RuvA specifically binds to HJ cruciform DNA, conferring on it an open structure. The RuvB hexamer acts as an ATP-dependent pump, pulling dsDNA into and through the RuvAB complex. HJ branch migration allows RuvC to scan DNA until it finds its consensus sequence, where it cleaves and resolves the cruciform DNA. The chain is Holliday junction branch migration complex subunit RuvA from Mesorhizobium japonicum (strain LMG 29417 / CECT 9101 / MAFF 303099) (Mesorhizobium loti (strain MAFF 303099)).